A 369-amino-acid polypeptide reads, in one-letter code: Core histone macro-H2A.1 (369 aa).

The region spanning 2 to 117 (SSRGGKKKST…NIHPELLAKK (116 aa)) is the Histone H2A domain. N6-lactoyllysine; alternate occurs at positions 7 and 9. Residue Lys-18 is modified to N6-methyllysine. Lys-116 is subject to N6-acetyllysine; alternate. A Glycyl lysine isopeptide (Lys-Gly) (interchain with G-Cter in ubiquitin); alternate cross-link involves residue Lys-116. Residue Lys-117 forms a Glycyl lysine isopeptide (Lys-Gly) (interchain with G-Cter in ubiquitin) linkage. Position 123 is an N6-acetyllysine; alternate (Lys-123). Lys-123 is modified (N6,N6-dimethyllysine; alternate). A Glycyl lysine isopeptide (Lys-Gly) (interchain with G-Cter in SUMO2); alternate cross-link involves residue Lys-123. The disordered stretch occupies residues 128–180 (ITPPPAKKAKSPSQKKPVAKKTGGKKGARKSKKKQGEVSKAASADSTTEGTPT). Thr-129 is subject to Phosphothreonine. Basic residues predominate over residues 144–160 (PVAKKTGGKKGARKSKK). Residue Lys-167 forms a Glycyl lysine isopeptide (Lys-Gly) (interchain with G-Cter in SUMO2) linkage. 2 positions are modified to phosphoserine: Ser-170 and Ser-173. Phosphothreonine is present on Thr-178. Residues 184–367 (TVLSTKSLFL…IYVQEMAKLD (184 aa)) enclose the Macro domain. Lys-189 is covalently cross-linked (Glycyl lysine isopeptide (Lys-Gly) (interchain with G-Cter in SUMO2)). Positions 203, 204, 226, 275, 312, 313, 314, and 316 each coordinate a glycoprotein. Lys-320 is covalently cross-linked (Glycyl lysine isopeptide (Lys-Gly) (interchain with G-Cter in SUMO2)).

This sequence belongs to the histone H2A family. The nucleosome is a histone octamer containing two molecules each of H2A, H2B, H3 and H4 assembled in one H3-H4 heterotetramer and two H2A-H2B heterodimers. Interacts with HDAC1 and HDAC2. Interacts with SPOP. Part of a complex consisting of MACROH2A1, CUL3 and SPOP. In terms of assembly, interacts with PARP1. Monoubiquitinated at either Lys-116 or Lys-117. May also be polyubiquitinated. Ubiquitination is mediated by the CUL3/SPOP E3 complex and does not promote proteasomal degradation. Instead, it is required for enrichment in inactive X chromosome chromatin. As to expression, widely expressed, with high levels in testis. Present in liver, kidney and adrenal gland (at protein level). In the liver, present in hepatocytes and at a lesser extent in cells of the bile ducts. In the kidney, expressed in proximal and distal convoluted tubules and in straight proximal tubules. In the adrenal gland, present in inner cells of the cortex and medulla.

It is found in the nucleus. The protein localises to the chromosome. Functionally, variant histone H2A which replaces conventional H2A in a subset of nucleosomes where it represses transcription. Nucleosomes wrap and compact DNA into chromatin, limiting DNA accessibility to the cellular machineries which require DNA as a template. Histones thereby play a central role in transcription regulation, DNA repair, DNA replication and chromosomal stability. DNA accessibility is regulated via a complex set of post-translational modifications of histones, also called histone code, and nucleosome remodeling. Involved in stable X chromosome inactivation. Inhibits the binding of transcription factors, including NF-kappa-B, and interferes with the activity of remodeling SWI/SNF complexes. Inhibits histone acetylation by EP300 and recruits class I HDACs, which induces a hypoacetylated state of chromatin. In terms of biological role, isoform that specifically binds poly-ADP-ribose and O-acetyl-ADP-ribose and plays a key role in NAD(+) metabolism. Able to bind to the ends of poly-ADP-ribose chains created by PARP1 and cap them. This prevents PARP1 from further addition of ADP-ribose and thus limits the consumption of nuclear NAD(+), allowing the cell to maintain proper NAD(+) levels in both the nucleus and the mitochondria to promote proper mitochondrial respiration. Increases the expression of genes involved in redox metabolism, including SOD3. Its function is as follows. In contrast to isoform 1, does not bind poly-ADP-ribose. Represses SOD3 gene expression. The chain is Core histone macro-H2A.1 from Mus musculus (Mouse).